The primary structure comprises 458 residues: Argininosuccinate lyase (458 aa).

It belongs to the lyase 1 family. Argininosuccinate lyase subfamily.

It is found in the cytoplasm. It catalyses the reaction 2-(N(omega)-L-arginino)succinate = fumarate + L-arginine. It participates in amino-acid biosynthesis; L-arginine biosynthesis; L-arginine from L-ornithine and carbamoyl phosphate: step 3/3. The sequence is that of Argininosuccinate lyase from Salmonella agona (strain SL483).